Reading from the N-terminus, the 329-residue chain is Glutamyl-Q tRNA(Asp) synthetase (329 aa).

L-glutamate-binding positions include Arg8–Ser12 and Glu44. The 'HIGH' region signature appears at Pro11–Asn21. Zn(2+) is bound by residues Cys100, Cys102, Tyr129, and Cys133. The L-glutamate site is built by Tyr196 and Arg214. The short motif at Arg252–Arg256 is the 'KMSKS' region element. Residue Lys255 coordinates ATP.

This sequence belongs to the class-I aminoacyl-tRNA synthetase family. GluQ subfamily. The cofactor is Zn(2+).

Catalyzes the tRNA-independent activation of glutamate in presence of ATP and the subsequent transfer of glutamate onto a tRNA(Asp). Glutamate is transferred on the 2-amino-5-(4,5-dihydroxy-2-cyclopenten-1-yl) moiety of the queuosine in the wobble position of the QUC anticodon. In Rhodopirellula baltica (strain DSM 10527 / NCIMB 13988 / SH1), this protein is Glutamyl-Q tRNA(Asp) synthetase.